The following is a 192-amino-acid chain: GTP cyclohydrolase-2 (192 aa).

50-54 contacts GTP; it reads RLHSE. 3 residues coordinate Zn(2+): Cys-55, Cys-66, and Cys-68. GTP-binding positions include 92 to 94 and Thr-114; that span reads EGR. The active-site Proton acceptor is Asp-126. Arg-128 acts as the Nucleophile in catalysis. GTP contacts are provided by Thr-149 and Lys-154.

This sequence belongs to the GTP cyclohydrolase II family. The cofactor is Zn(2+).

The catalysed reaction is GTP + 4 H2O = 2,5-diamino-6-hydroxy-4-(5-phosphoribosylamino)-pyrimidine + formate + 2 phosphate + 3 H(+). Its pathway is cofactor biosynthesis; riboflavin biosynthesis; 5-amino-6-(D-ribitylamino)uracil from GTP: step 1/4. Catalyzes the conversion of GTP to 2,5-diamino-6-ribosylamino-4(3H)-pyrimidinone 5'-phosphate (DARP), formate and pyrophosphate. The chain is GTP cyclohydrolase-2 from Helicobacter pylori (strain J99 / ATCC 700824) (Campylobacter pylori J99).